Reading from the N-terminus, the 496-residue chain is Fibronectin type III and SPRY domain-containing protein 1 (496 aa).

The stretch at 4 to 99 (QREALRKIIT…ALESSEELLE (96 aa)) forms a coiled coil. Residues 105 to 162 (LQASDSEDFSQAAKEIKDGITMAPAFRLSLKAKVSDNMSHLMVDFAQERQMLQALKFL) form the COS domain. Residues 164 to 268 (VPSAPTIDLA…EPVTLETPAF (105 aa)) form the Fibronectin type-III domain. The B30.2/SPRY domain occupies 290–477 (WDAMGGKVQD…VTTGLQVPSA (188 aa)). The interval 301 to 336 (KAREKEGKGRTASPVNSPARGTPSPKRMSSGRGGRD) is disordered. Residues Arg310 and Arg320 each carry the omega-N-methylarginine modification.

Oligomerization is required for binding to microtubules.

It localises to the cytoplasm. The protein localises to the cytoskeleton. Its subcellular location is the microtubule organizing center. The protein resides in the centrosome. It is found in the nucleus. It localises to the cleavage furrow. Its function is as follows. May be involved in microtubule organization and stabilization. In Mus musculus (Mouse), this protein is Fibronectin type III and SPRY domain-containing protein 1 (Fsd1).